We begin with the raw amino-acid sequence, 106 residues long: YcgL domain-containing protein HCH_02617 (106 aa).

The YcgL domain maps to 6 to 90; the sequence is RLISIFRSSK…VQDDYMMDVV (85 aa).

The sequence is that of YcgL domain-containing protein HCH_02617 from Hahella chejuensis (strain KCTC 2396).